Here is a 364-residue protein sequence, read N- to C-terminus: Glycerol dehydrogenase (364 aa).

5 residues coordinate NAD(+): Asp-37, Gly-92, Lys-93, Thr-114, and Ser-117. Asp-119 contributes to the glycerol binding site. NAD(+) contacts are provided by Ser-123, Leu-125, and Tyr-129. Glycerol contacts are provided by Asp-169, His-252, and His-269. Residues Asp-169, His-252, and His-269 each contribute to the Zn(2+) site.

Belongs to the iron-containing alcohol dehydrogenase family. Requires Zn(2+) as cofactor.

The catalysed reaction is glycerol + NAD(+) = dihydroxyacetone + NADH + H(+). It participates in polyol metabolism; glycerol fermentation; glycerone phosphate from glycerol (oxidative route): step 1/2. Functionally, catalyzes the NAD-dependent oxidation of glycerol to dihydroxyacetone (glycerone). The sequence is that of Glycerol dehydrogenase (gldA) from Thermotoga maritima (strain ATCC 43589 / DSM 3109 / JCM 10099 / NBRC 100826 / MSB8).